We begin with the raw amino-acid sequence, 2388 residues long: Hybrid signal transduction histidine kinase M (2388 aa).

Disordered stretches follow at residues 1–32 (MSNYLNANSTENNNNNNNNNNNNNNNINNNFN), 42–61 (FNTPPIGSNNNNNNNNNSIS), 69–111 (NECN…STPI), 123–209 (NRSN…NAYP), 237–337 (TLLN…SPKL), 361–421 (SPHG…YNDN), 430–449 (TRNTGYSSTGSIGNSSSSSF), and 486–542 (IYTP…NNNE). The span at 69–82 (NECNSGGEQSPKIK) shows a compositional bias: polar residues. Composition is skewed to low complexity over residues 83–110 (TNNNSYNTPVSSSTSTTGTNTTPMKSTP), 125–206 (SNLN…SNSN), and 242–288 (SSNN…NNGG). Positions 293-306 (QFISSDNKYNTVGN) are enriched in polar residues. A compositionally biased stretch (basic residues) spans 309–322 (HHHHHHQLHNHRHS). 4 stretches are compositionally biased toward low complexity: residues 325–337 (QGSSSPIKSSPKL), 361–399 (SPHGSPFSSSSSSRKSSSSPSFLNQNNQNNPNNQNNQNN), 410–419 (NNSNDSFDYN), and 432–449 (NTGYSSTGSIGNSSSSSF). Pro residues predominate over residues 489-505 (PPYPQPYPQPPQLPPPS). Positions 506-541 (SSSSLSKENDNVDNNNTNNNNNNNNNNNNNNNNNNN) are enriched in low complexity. The next 4 helical transmembrane spans lie at 550–570 (TMNLIHISLLSVLAFYIFLMV), 589–609 (FILIFSFHFIFSSILMFLLVV), 645–665 (YIFLGLVLSGLVNILQVNLFF), and 679–699 (NISTAIEFLVVGIVLNFSHIP). Positions 732-888 (NNDNKNKIND…NNNEEDDEEE (157 aa)) are disordered. Positions 735 to 744 (NKNKINDKSD) are enriched in basic and acidic residues. Residues 745-880 (NSNSITNNNN…NNNNNNNNNN (136 aa)) are compositionally biased toward low complexity. 3 helical membrane-spanning segments follow: residues 896-916 (FQIFFTRIFLCLSITYTLIVL), 953-973 (VQFQAPLATLLHFIQLVLLLV), and 1025-1045 (CSVGFPIVGIILDIYSGWMSI). Residues 1093–1499 (RLVQNTGSII…VFELQVPMKC (407 aa)) enclose the Histidine kinase domain. Positions 1236-1257 (PIHHHRHHHRHHHHHHHHHHHH) are enriched in basic residues. The tract at residues 1236–1410 (PIHHHRHHHR…INNNINNNNN (175 aa)) is disordered. A compositionally biased stretch (acidic residues) spans 1260–1274 (DDDDYDDDNDDDNNT). A compositionally biased stretch (basic and acidic residues) spans 1286 to 1315 (LSDKIKDNQDENLELKKSNNDKIIENKENQ). Residues 1316–1410 (ENNNNNNNNN…INNNINNNNN (95 aa)) are compositionally biased toward low complexity. Positions 1541-1656 (KILVIDDNPN…QLTVLSQLLP (116 aa)) constitute a Response regulatory 1 domain. At aspartate 1592 the chain carries 4-aspartylphosphate. Disordered regions lie at residues 1666 to 1702 (SNQNLNNSGSSNGGGGGGGGGGGGGGGGGSGSSNIDF), 1960 to 2022 (GNNS…NSSN), 2036 to 2121 (CKGD…DIIN), 2133 to 2183 (QQQL…VKSS), and 2218 to 2256 (NQLNNNINNLNLNSNNNNNNNNNNNNNNNTNNDNNNNND). Gly residues predominate over residues 1676–1696 (SNGGGGGGGGGGGGGGGGGSG). A compositionally biased stretch (low complexity) spans 1974 to 1985 (TNNNTTTTTTTT). Residues 1986-2010 (QPKKSPILTSSNGSDKSEGSTGSNR) show a composition bias toward polar residues. Low complexity predominate over residues 2054 to 2064 (DSSSSSSSSDS). Positions 2065–2076 (HGQDDHSYRLED) are enriched in basic and acidic residues. Low complexity-rich tracts occupy residues 2078–2109 (SISSPSSQSPLLDLSGTSGTSGTTNLANSGIN) and 2133–2165 (QQQLQQQQQPQQQQPPGTPTISPSSSFPLLPIP). Residues 2169–2183 (INSSGASSGIKVKSS) show a composition bias toward polar residues. The region spanning 2262 to 2383 (NILLVEDNLV…LLISLLKKLV (122 aa)) is the Response regulatory 2 domain. A 4-aspartylphosphate modification is found at aspartate 2313.

In terms of processing, activation probably requires transfer of a phosphate group between a histidine in the kinase core (transmitter) domain and an aspartate of the receiver domain.

The protein resides in the membrane. It carries out the reaction ATP + protein L-histidine = ADP + protein N-phospho-L-histidine.. Acts as a receptor histidine kinase for a signal transduction pathway. This protein undergoes an ATP-dependent autophosphorylation at a conserved histidine residue in the kinase core, and a phosphoryl group is then transferred to a conserved aspartate residue in the receiver domain. The sequence is that of Hybrid signal transduction histidine kinase M (dhkM) from Dictyostelium discoideum (Social amoeba).